We begin with the raw amino-acid sequence, 261 residues long: MTQEFIDKVSSYLTPDVDIAPISQGAEAIVFTTTTHPYLPRAKDSHQKYIIKYRPPKRYRHPQIDQALTKHRTLNESRLLAKLYLIPGLCVPQLIACDPYNGFIWLEFLGEDLPGGHGFSNLKNFLWMHDQDPYSDLVATTLRKVGRQIGLLHWNDYCHGDLTSSNIVLVRDGARWTPHLIDFGLGSVSNLVEDKGVDLYVLERAILSTHSKHAEKYNAWIMEGFEEVYREQGAKGAKKLKEVTKRFEEVRLRGRKRSMLG.

A Protein kinase domain is found at aspartate 16–glycine 261. Residues isoleucine 22–valine 30 and lysine 43 each bind ATP. The active-site Proton acceptor is aspartate 161. Phosphoserine; by autocatalysis is present on residues serine 187 and serine 189.

It belongs to the protein kinase superfamily. BUD32 family. In terms of assembly, component of the EKC/KEOPS complex composed of at least BUD32, CGI121, GON7, KAE1 and PCC1; the whole complex dimerizes.

It localises to the cytoplasm. The protein resides in the nucleus. Its subcellular location is the chromosome. It is found in the telomere. The enzyme catalyses L-seryl-[protein] + ATP = O-phospho-L-seryl-[protein] + ADP + H(+). The catalysed reaction is L-threonyl-[protein] + ATP = O-phospho-L-threonyl-[protein] + ADP + H(+). Its function is as follows. Component of the EKC/KEOPS complex that is required for the formation of a threonylcarbamoyl group on adenosine at position 37 (t(6)A37) in tRNAs that read codons beginning with adenine. The complex is probably involved in the transfer of the threonylcarbamoyl moiety of threonylcarbamoyl-AMP (TC-AMP) to the N6 group of A37. BUD32 has ATPase activity in the context of the EKC/KEOPS complex and likely plays a supporting role to the catalytic subunit KAE1. The EKC/KEOPS complex also promotes both telomere uncapping and telomere elongation. The complex is required for efficient recruitment of transcriptional coactivators. Important for bud site selection. The polypeptide is EKC/KEOPS complex subunit BUD32 (BUD32) (Saccharomyces cerevisiae (strain ATCC 204508 / S288c) (Baker's yeast)).